A 623-amino-acid chain; its full sequence is Glutamyl-tRNA(Gln) amidotransferase subunit E (623 aa).

Belongs to the GatB/GatE family. GatE subfamily. In terms of assembly, heterodimer of GatD and GatE.

It catalyses the reaction L-glutamyl-tRNA(Gln) + L-glutamine + ATP + H2O = L-glutaminyl-tRNA(Gln) + L-glutamate + ADP + phosphate + H(+). In terms of biological role, allows the formation of correctly charged Gln-tRNA(Gln) through the transamidation of misacylated Glu-tRNA(Gln) in organisms which lack glutaminyl-tRNA synthetase. The reaction takes place in the presence of glutamine and ATP through an activated gamma-phospho-Glu-tRNA(Gln). The GatDE system is specific for glutamate and does not act on aspartate. The chain is Glutamyl-tRNA(Gln) amidotransferase subunit E from Haloarcula marismortui (strain ATCC 43049 / DSM 3752 / JCM 8966 / VKM B-1809) (Halobacterium marismortui).